The sequence spans 239 residues: Protein GrpE (239 aa).

Disordered regions lie at residues 1 to 60 and 208 to 239; these read MIEN…SNND and SMGPGKQKSQQEVEKDTVEGDVDSDANTSEDV. Over residues 28-42 the composition is skewed to polar residues; the sequence is SMQNSTTENDELSSQ. 2 stretches are compositionally biased toward basic and acidic residues: residues 43 to 53 and 216 to 225; these read KTEEINTEELK and SQQEVEKDTV. Acidic residues predominate over residues 226 to 239; sequence EGDVDSDANTSEDV.

It belongs to the GrpE family. As to quaternary structure, homodimer.

The protein resides in the cytoplasm. Functionally, participates actively in the response to hyperosmotic and heat shock by preventing the aggregation of stress-denatured proteins, in association with DnaK and GrpE. It is the nucleotide exchange factor for DnaK and may function as a thermosensor. Unfolded proteins bind initially to DnaJ; upon interaction with the DnaJ-bound protein, DnaK hydrolyzes its bound ATP, resulting in the formation of a stable complex. GrpE releases ADP from DnaK; ATP binding to DnaK triggers the release of the substrate protein, thus completing the reaction cycle. Several rounds of ATP-dependent interactions between DnaJ, DnaK and GrpE are required for fully efficient folding. This is Protein GrpE from Prochlorococcus marinus (strain MIT 9301).